A 246-amino-acid chain; its full sequence is Biosynthetic peptidoglycan transglycosylase (246 aa).

Residues 20–42 traverse the membrane as a helical segment; sequence SLRWVLAAPLLFAAASVLQVLAL.

This sequence belongs to the glycosyltransferase 51 family.

It localises to the cell inner membrane. The catalysed reaction is [GlcNAc-(1-&gt;4)-Mur2Ac(oyl-L-Ala-gamma-D-Glu-L-Lys-D-Ala-D-Ala)](n)-di-trans,octa-cis-undecaprenyl diphosphate + beta-D-GlcNAc-(1-&gt;4)-Mur2Ac(oyl-L-Ala-gamma-D-Glu-L-Lys-D-Ala-D-Ala)-di-trans,octa-cis-undecaprenyl diphosphate = [GlcNAc-(1-&gt;4)-Mur2Ac(oyl-L-Ala-gamma-D-Glu-L-Lys-D-Ala-D-Ala)](n+1)-di-trans,octa-cis-undecaprenyl diphosphate + di-trans,octa-cis-undecaprenyl diphosphate + H(+). It functions in the pathway cell wall biogenesis; peptidoglycan biosynthesis. Functionally, peptidoglycan polymerase that catalyzes glycan chain elongation from lipid-linked precursors. The sequence is that of Biosynthetic peptidoglycan transglycosylase from Xanthomonas campestris pv. campestris (strain 8004).